The following is a 97-amino-acid chain: Protein S100-A10 (97 aa).

N6-acetyllysine is present on residues lysine 23, lysine 28, lysine 54, and lysine 57. In terms of domain architecture, EF-hand spans 47–82; it reads KDPLAVDKIMKDLDQCRDGKVGFQSFLSLVAGLTIA. Positions 60–71 are ancestral calcium site; sequence DQCRDGKVGFQS.

The protein belongs to the S-100 family. As to quaternary structure, heterotetramer containing 2 light chains of S100A10/p11 and 2 heavy chains of ANXA2/p36. Interacts with SCN10A. Interacts with TASOR.

Its function is as follows. Because S100A10 induces the dimerization of ANXA2/p36, it may function as a regulator of protein phosphorylation in that the ANXA2 monomer is the preferred target (in vitro) of tyrosine-specific kinase. This chain is Protein S100-A10 (S100a10), found in Mus musculus (Mouse).